Here is a 195-residue protein sequence, read N- to C-terminus: UPF0301 protein Bpro_1142 (195 aa).

This sequence belongs to the UPF0301 (AlgH) family.

The chain is UPF0301 protein Bpro_1142 from Polaromonas sp. (strain JS666 / ATCC BAA-500).